The chain runs to 386 residues: GTPase Obg (386 aa).

The Obg domain occupies 1 to 159; the sequence is MKFVDEASIL…RELLLELMLL (159 aa). Residues 127-147 form a disordered region; sequence NTRFKSSVNRTPRQKTNGTPG. Residues 129–145 show a composition bias toward polar residues; it reads RFKSSVNRTPRQKTNGT. The 174-residue stretch at 160-333 folds into the OBG-type G domain; sequence ADVGMLGMPN…LCWDVMTFII (174 aa). GTP is bound by residues 166-173, 191-195, 213-216, 283-286, and 314-316; these read GMPNAGKS, FTTLV, DIPG, NKID, and SAA. The Mg(2+) site is built by S173 and T193.

The protein belongs to the TRAFAC class OBG-HflX-like GTPase superfamily. OBG GTPase family. As to quaternary structure, monomer. Mg(2+) is required as a cofactor.

It localises to the cytoplasm. An essential GTPase which binds GTP, GDP and possibly (p)ppGpp with moderate affinity, with high nucleotide exchange rates and a fairly low GTP hydrolysis rate. Plays a role in control of the cell cycle, stress response, ribosome biogenesis and in those bacteria that undergo differentiation, in morphogenesis control. The sequence is that of GTPase Obg from Escherichia coli (strain UTI89 / UPEC).